The following is a 168-amino-acid chain: G/U mismatch-specific DNA glycosylase (168 aa).

This sequence belongs to the uracil-DNA glycosylase (UDG) superfamily. TDG/mug family. Binds DNA as a monomer.

The protein resides in the cytoplasm. The enzyme catalyses Specifically hydrolyzes mismatched double-stranded DNA and polynucleotides, releasing free uracil.. Excises ethenocytosine and uracil, which can arise by alkylation or deamination of cytosine, respectively, from the corresponding mispairs with guanine in ds-DNA. It is capable of hydrolyzing the carbon-nitrogen bond between the sugar-phosphate backbone of the DNA and the mispaired base. The complementary strand guanine functions in substrate recognition. Required for DNA damage lesion repair in stationary-phase cells. The sequence is that of G/U mismatch-specific DNA glycosylase from Enterobacter sp. (strain 638).